Reading from the N-terminus, the 268-residue chain is MLKTEHISFQYEDGKQALTDVSIDLEKGNIIGLIGANGSGKSTLFMQLLGINKPSDGTVYFEGKPLAYTKKALFALRKKVSIVFQDPDQQIFYSNVRDDVAFALRNLGVSETEVEARVTKVLDIVGAKDFQHKPVQYLSYGQKKRVAIAGALVLDTDWLLLDEPTAGLDPIGKKIMMEIIERLASQGKKILISSHDIDLIYEICDYVYMLKDGSVLTDGETSNVFLEKSNVEQAGLVQPWLIKLHQQAGYPLFKKEADFFAHTGKVTN.

Residues 2 to 237 (LKTEHISFQY…KSNVEQAGLV (236 aa)) form the ABC transporter domain. An ATP-binding site is contributed by 35-42 (GANGSGKS).

It belongs to the ABC transporter superfamily.

The protein localises to the cell membrane. In terms of biological role, probably part of an ABC transporter complex. Responsible for energy coupling to the transport system. The sequence is that of Putative ABC transporter ATP-binding protein LMOf2365_1216 from Listeria monocytogenes serotype 4b (strain F2365).